The primary structure comprises 98 residues: Protein translation factor SUI1 homolog (98 aa).

This sequence belongs to the SUI1 family.

In Thermococcus onnurineus (strain NA1), this protein is Protein translation factor SUI1 homolog.